Reading from the N-terminus, the 286-residue chain is Probable biotin transporter (286 aa).

EamA domains are found at residues 3-128 (YLLF…AIIR) and 139-277 (GFLL…LWVN). The next 10 helical transmembrane spans lie at 4-24 (LLFV…YLAG), 26-46 (VDSY…FLPL), 56-76 (FVGG…VCLY), 81-101 (VLTV…VALF), 109-129 (FNFW…IIRY), 136-156 (FLQG…GQVL), 174-194 (FGYF…LFGD), 203-223 (LQWG…QFWW), 234-254 (TLAV…LLIW), and 258-280 (ADLP…NRLG).

This sequence belongs to the drug/metabolite transporter (DMT) superfamily. 10 TMS drug/metabolite exporter (DME) (TC 2.A.7.3) family.

The protein localises to the cell inner membrane. It catalyses the reaction biotin(in) = biotin(out). Uptake of biotin. The chain is Probable biotin transporter from Pseudomonas aeruginosa (strain ATCC 15692 / DSM 22644 / CIP 104116 / JCM 14847 / LMG 12228 / 1C / PRS 101 / PAO1).